The primary structure comprises 125 residues: Small ribosomal subunit protein uS12c (125 aa).

It belongs to the universal ribosomal protein uS12 family. As to quaternary structure, part of the 30S ribosomal subunit.

It is found in the plastid. The protein resides in the chloroplast. Functionally, with S4 and S5 plays an important role in translational accuracy. Located at the interface of the 30S and 50S subunits. The protein is Small ribosomal subunit protein uS12c (rps12) of Nephroselmis olivacea (Green alga).